A 240-amino-acid chain; its full sequence is Cell division control protein 14 (240 aa).

In terms of assembly, interacts with sid1.

Its subcellular location is the cytoplasm. The protein localises to the cytoskeleton. It is found in the microtubule organizing center. It localises to the spindle pole body. In terms of biological role, has a role in the septation initiation network (SIN) required for cytokinesis. The sequence is that of Cell division control protein 14 (cdc14) from Schizosaccharomyces pombe (strain 972 / ATCC 24843) (Fission yeast).